The following is a 155-amino-acid chain: 6,7-dimethyl-8-ribityllumazine synthase (155 aa).

Residues Phe-22, 56–58 (AFE), and 80–82 (AVI) each bind 5-amino-6-(D-ribitylamino)uracil. 85-86 (ST) serves as a coordination point for (2S)-2-hydroxy-3-oxobutyl phosphate. His-88 (proton donor) is an active-site residue. Phe-113 serves as a coordination point for 5-amino-6-(D-ribitylamino)uracil. Arg-127 is a (2S)-2-hydroxy-3-oxobutyl phosphate binding site.

The protein belongs to the DMRL synthase family.

The enzyme catalyses (2S)-2-hydroxy-3-oxobutyl phosphate + 5-amino-6-(D-ribitylamino)uracil = 6,7-dimethyl-8-(1-D-ribityl)lumazine + phosphate + 2 H2O + H(+). It functions in the pathway cofactor biosynthesis; riboflavin biosynthesis; riboflavin from 2-hydroxy-3-oxobutyl phosphate and 5-amino-6-(D-ribitylamino)uracil: step 1/2. In terms of biological role, catalyzes the formation of 6,7-dimethyl-8-ribityllumazine by condensation of 5-amino-6-(D-ribitylamino)uracil with 3,4-dihydroxy-2-butanone 4-phosphate. This is the penultimate step in the biosynthesis of riboflavin. The sequence is that of 6,7-dimethyl-8-ribityllumazine synthase from Bifidobacterium longum subsp. infantis (strain ATCC 15697 / DSM 20088 / JCM 1222 / NCTC 11817 / S12).